We begin with the raw amino-acid sequence, 264 residues long: S-adenosylmethionine decarboxylase proenzyme (264 aa).

Ser112 serves as the catalytic Schiff-base intermediate with substrate; via pyruvic acid. Ser112 bears the Pyruvic acid (Ser); by autocatalysis mark. His117 functions as the Proton acceptor; for processing activity in the catalytic mechanism. The active-site Proton donor; for catalytic activity is the Cys140.

The protein belongs to the prokaryotic AdoMetDC family. Type 2 subfamily. In terms of assembly, heterooctamer of four alpha and four beta chains arranged as a tetramer of alpha/beta heterodimers. Requires pyruvate as cofactor. Is synthesized initially as an inactive proenzyme. Formation of the active enzyme involves a self-maturation process in which the active site pyruvoyl group is generated from an internal serine residue via an autocatalytic post-translational modification. Two non-identical subunits are generated from the proenzyme in this reaction, and the pyruvate is formed at the N-terminus of the alpha chain, which is derived from the carboxyl end of the proenzyme. The post-translation cleavage follows an unusual pathway, termed non-hydrolytic serinolysis, in which the side chain hydroxyl group of the serine supplies its oxygen atom to form the C-terminus of the beta chain, while the remainder of the serine residue undergoes an oxidative deamination to produce ammonia and the pyruvoyl group blocking the N-terminus of the alpha chain.

It carries out the reaction S-adenosyl-L-methionine + H(+) = S-adenosyl 3-(methylsulfanyl)propylamine + CO2. It functions in the pathway amine and polyamine biosynthesis; S-adenosylmethioninamine biosynthesis; S-adenosylmethioninamine from S-adenosyl-L-methionine: step 1/1. Catalyzes the decarboxylation of S-adenosylmethionine to S-adenosylmethioninamine (dcAdoMet), the propylamine donor required for the synthesis of the polyamines spermine and spermidine from the diamine putrescine. In Sodalis glossinidius (strain morsitans), this protein is S-adenosylmethionine decarboxylase proenzyme.